The following is a 220-amino-acid chain: MGKYYCDYCDIYLTHDSMNARKAHNSGRNHVANVRDYFAGLGGNQAQSLIDQIIQQHESGGRNQMMMAPSMRLGAGFMNPLATQPGYPGPPPPGAFPTFPPTAGTPPFRPPFPPSSAPGAPPPTMPPFLPPNASAGAAPGIGMGSTPPFPPNTASPNPGMPPFRPPMGMGMPPAPAQAQAQGSPMGMPQQGQQGTFTPTQEVPQGAGAGIHPDRLRMLGQ.

The Matrin-type zinc finger occupies 4–36 (YYCDYCDIYLTHDSMNARKAHNSGRNHVANVRD). Pro residues-rich tracts occupy residues 88-130 (PGPP…PFLP) and 147-165 (PPFPPNTASPNPGMPPFRP). The segment at 88-220 (PGPPPPGAFP…HPDRLRMLGQ (133 aa)) is disordered. Low complexity predominate over residues 166-200 (PMGMGMPPAPAQAQAQGSPMGMPQQGQQGTFTPTQ). The span at 211–220 (HPDRLRMLGQ) shows a compositional bias: basic and acidic residues.

Belongs to the U1 small nuclear ribonucleoprotein C family. As to quaternary structure, U1 snRNP is composed of the 7 core Sm proteins B/B', D1, D2, D3, E, F and G that assemble in a heptameric protein ring on the Sm site of the small nuclear RNA to form the core snRNP, and at least 3 U1 snRNP-specific proteins U1-70K, U1-A and U1-C. U1-C interacts with U1 snRNA and the 5' splice-site region of the pre-mRNA.

Its subcellular location is the nucleus. Functionally, component of the spliceosomal U1 snRNP, which is essential for recognition of the pre-mRNA 5' splice-site and the subsequent assembly of the spliceosome. U1-C is directly involved in initial 5' splice-site recognition for both constitutive and regulated alternative splicing. The interaction with the 5' splice-site seems to precede base-pairing between the pre-mRNA and the U1 snRNA. Stimulates commitment or early (E) complex formation by stabilizing the base pairing of the 5' end of the U1 snRNA and the 5' splice-site region. This chain is U1 small nuclear ribonucleoprotein C, found in Cryptococcus neoformans var. neoformans serotype D (strain JEC21 / ATCC MYA-565) (Filobasidiella neoformans).